Here is a 410-residue protein sequence, read N- to C-terminus: 2-epi-5-epi-valiolone synthase (410 aa).

NAD(+) is bound by residues aspartate 66, 97–100, 130–134, 154–155, lysine 167, lysine 176, and 194–197; these read ETLK, GVLMD, TT, and FLAT. The active site involves lysine 167. Residues glutamate 209, histidine 280, and histidine 296 each contribute to the a divalent metal cation site.

This sequence belongs to the sugar phosphate cyclases superfamily. EEVS family. It depends on NAD(+) as a cofactor. Co(2+) is required as a cofactor.

The catalysed reaction is D-sedoheptulose 7-phosphate = 2-epi-5-epi-valiolone + phosphate. Its function is as follows. Catalyzes the cyclization of D-sedoheptulose 7-phosphate to 2-epi-5-epi-valiolone. Involved in salbostatin biosynthesis. In Streptomyces albus (strain ATCC 21838 / DSM 41398 / FERM P-419 / JCM 4703 / NBRC 107858), this protein is 2-epi-5-epi-valiolone synthase.